An 82-amino-acid polypeptide reads, in one-letter code: Alpha-defensin 17 (82 aa).

Residues 1–8 form the signal peptide; the sequence is LLAFQVQA. The tract at residues 1-43 is disordered; it reads LLAFQVQADPIQNTDEETKTEEQPGEEDQAVSVSFGDPEGTSL. The propeptide occupies 9-47; it reads DPIQNTDEETKTEEQPGEEDQAVSVSFGDPEGTSLQEES. 3 cysteine pairs are disulfide-bonded: C53/C81, C55/C70, and C60/C80.

It belongs to the alpha-defensin family.

It is found in the secreted. Functionally, probably contributes to the antimicrobial barrier function of the small bowel mucosa. The protein is Alpha-defensin 17 (Defa17) of Mus musculus (Mouse).